The chain runs to 170 residues: MTIIVGIDPGSRVTGYGIIRQQGRHLTYLGSGCIRTVVDDMPTRLKLIYAGVSEIITQFQPDCMAIEQVFMAKNPDSALKLGQARGVAIVAGVNQDLPVFEYAARLVKKTVVGTGAADKKQVQHMVRSLLKLSASPQADAADALAIAITHCHFNQSLLRTAAVKVNPLAG.

Catalysis depends on residues D8, E67, and D139. Mg(2+) is bound by residues D8, E67, and D139.

The protein belongs to the RuvC family. Homodimer which binds Holliday junction (HJ) DNA. The HJ becomes 2-fold symmetrical on binding to RuvC with unstacked arms; it has a different conformation from HJ DNA in complex with RuvA. In the full resolvosome a probable DNA-RuvA(4)-RuvB(12)-RuvC(2) complex forms which resolves the HJ. Requires Mg(2+) as cofactor.

It is found in the cytoplasm. The catalysed reaction is Endonucleolytic cleavage at a junction such as a reciprocal single-stranded crossover between two homologous DNA duplexes (Holliday junction).. In terms of biological role, the RuvA-RuvB-RuvC complex processes Holliday junction (HJ) DNA during genetic recombination and DNA repair. Endonuclease that resolves HJ intermediates. Cleaves cruciform DNA by making single-stranded nicks across the HJ at symmetrical positions within the homologous arms, yielding a 5'-phosphate and a 3'-hydroxyl group; requires a central core of homology in the junction. The consensus cleavage sequence is 5'-(A/T)TT(C/G)-3'. Cleavage occurs on the 3'-side of the TT dinucleotide at the point of strand exchange. HJ branch migration catalyzed by RuvA-RuvB allows RuvC to scan DNA until it finds its consensus sequence, where it cleaves and resolves the cruciform DNA. The chain is Crossover junction endodeoxyribonuclease RuvC from Pectobacterium atrosepticum (strain SCRI 1043 / ATCC BAA-672) (Erwinia carotovora subsp. atroseptica).